Reading from the N-terminus, the 299-residue chain is Coenzyme PQQ synthesis protein B (299 aa).

Belongs to the PqqB family.

Its pathway is cofactor biosynthesis; pyrroloquinoline quinone biosynthesis. In terms of biological role, may be involved in the transport of PQQ or its precursor to the periplasm. The sequence is that of Coenzyme PQQ synthesis protein B from Methylobacterium sp. (strain 4-46).